Reading from the N-terminus, the 153-residue chain is Aspartate carbamoyltransferase regulatory chain (153 aa).

Positions 109, 114, 138, and 141 each coordinate Zn(2+).

The protein belongs to the PyrI family. Contains catalytic and regulatory chains. Zn(2+) serves as cofactor.

Functionally, involved in allosteric regulation of aspartate carbamoyltransferase. This Nitrosopumilus maritimus (strain SCM1) protein is Aspartate carbamoyltransferase regulatory chain.